The following is a 239-amino-acid chain: tRNA (guanine-N(7)-)-methyltransferase (239 aa).

4 residues coordinate S-adenosyl-L-methionine: glutamate 69, glutamate 94, aspartate 121, and aspartate 144. Residue aspartate 144 is part of the active site. Lysine 148 is a binding site for substrate. Positions 150–155 (RHNKRR) are interaction with RNA. Substrate contacts are provided by residues aspartate 180 and 217-220 (TKFE).

The protein belongs to the class I-like SAM-binding methyltransferase superfamily. TrmB family. In terms of assembly, monomer.

The catalysed reaction is guanosine(46) in tRNA + S-adenosyl-L-methionine = N(7)-methylguanosine(46) in tRNA + S-adenosyl-L-homocysteine. The protein operates within tRNA modification; N(7)-methylguanine-tRNA biosynthesis. Functionally, catalyzes the formation of N(7)-methylguanine at position 46 (m7G46) in tRNA. In Cronobacter sakazakii (strain ATCC BAA-894) (Enterobacter sakazakii), this protein is tRNA (guanine-N(7)-)-methyltransferase.